The primary structure comprises 508 residues: 2,3-bisphosphoglycerate-independent phosphoglycerate mutase (508 aa).

Residues Asp-11 and Ser-61 each coordinate Mn(2+). Residue Ser-61 is the Phosphoserine intermediate of the active site. Substrate contacts are provided by residues His-122, 150–151 (RD), Arg-182, Arg-188, 257–260 (RPDR), and Lys-332. Mn(2+) contacts are provided by Asp-397, His-401, Asp-438, His-439, and His-456.

It belongs to the BPG-independent phosphoglycerate mutase family. Monomer. Mn(2+) is required as a cofactor.

The enzyme catalyses (2R)-2-phosphoglycerate = (2R)-3-phosphoglycerate. It participates in carbohydrate degradation; glycolysis; pyruvate from D-glyceraldehyde 3-phosphate: step 3/5. In terms of biological role, catalyzes the interconversion of 2-phosphoglycerate and 3-phosphoglycerate. In Mycoplasma pneumoniae (strain ATCC 29342 / M129 / Subtype 1) (Mycoplasmoides pneumoniae), this protein is 2,3-bisphosphoglycerate-independent phosphoglycerate mutase.